Here is a 610-residue protein sequence, read N- to C-terminus: MAPPLYVKGGVWTNVEDEILKAAIQKYGIYQWERISSLLPKKSAKQVKARWVEYLSPLLNKTDWTKEEDEKLLNLHKIFPNQWRSISNILNRTAVQCVERYQKLIDEAAGIKPGDDEENLGLSGPGIETLPAVGASSGLAVGEMNLNPESKPARPDDEDLPDDEREMLAEAKARLGNIQGKKAKRKARERMLEESKRIALLQKRRELKSAGINVKLTTRNKKKRKEFDYNADIPHEIIPQAGPYDTAEELKQNDFEKQQFGQQVSTKGISMKDIDDRIAKEESRRKKEIEKKKLERKREFNAAASLISEHEDSKRRKLNLPEPGTHNFEKTKSDVLTLTNQANNKLSEKEIARNQNKKRAAVAQLIKATFERLPPPKHETGEILPFVSTNILEFRNDVNANDISDIAGAKLPDETATNVSTLISRVVQRELPIPHPNNLRDLSTVKFDTLVDKLIAEECHRLIRSDYKQYHDTTINGVSTDKYDRDLLEKINQDIDKEFAQMDVSTVHSFEDYVLPKNFKVAESIIENLHTFHNENEKLTNKILESTNYEDQRDQKLQQLTHLWRELSDVNLSYSIEKKLFELESSAIDKELLRLRSEIDKLNKKIETLR.

HTH myb-type domains are found at residues 1 to 55 (MAPP…VEYL) and 56 to 109 (SPLL…DEAA). DNA-binding regions (H-T-H motif) lie at residues 32-55 (WERI…VEYL) and 83-105 (WRSI…QKLI). The tract at residues 142-161 (GEMNLNPESKPARPDDEDLP) is disordered. Positions 162 to 206 (DDEREMLAEAKARLGNIQGKKAKRKARERMLEESKRIALLQKRRE) form a coiled coil. Positions 308–329 (SEHEDSKRRKLNLPEPGTHNFE) are disordered. Coiled-coil stretches lie at residues 337–368 (TLTN…LIKA) and 585–610 (SSAI…ETLR).

The protein belongs to the CEF1 family. Associated with the spliceosome.

The protein resides in the cytoplasm. It localises to the nucleus. Its function is as follows. Involved in pre-mRNA splicing and cell cycle control. The polypeptide is Pre-mRNA-splicing factor CEF1 (CEF1) (Candida albicans (strain SC5314 / ATCC MYA-2876) (Yeast)).